The following is a 73-amino-acid chain: STKNGRDSNSKRLGVKVYGNQPAKAGSIIVRQRGLTFKPGKGVSVGKDYTIFATQNGIVQFESDKKEKIISVY.

This sequence belongs to the bacterial ribosomal protein bL27 family.

It is found in the plastid. Its subcellular location is the chloroplast. The chain is Large ribosomal subunit protein bL27c (rpl27) from Chrysochromulina alifera (Plankton alga).